Here is a 298-residue protein sequence, read N- to C-terminus: MLYQQISQNKQGTVVLLVVFFALLALIGASAGYLLLDNYAMGLVLALVIGVIYATSMIFQSTSLVMSMNNAREVTEKEAPGFFHIVEDMAMVAQIPMPRVFIIEDPSLNAFATGSSPQNAAVAATTGLLEVMNREELEGVIGHEISHIRNYDIRISTIAVALASAVTVISSIGGRMLWYGGGSRRQRDDGDDDVLRIITLLLSLLSLLLAPLVASLIQLAISRQREYLADASSVELTRNPQGMIKALEKLQLSQPMKHPVDDASAALYINEPRKKRSFSSLFSTHPPIEERIERLKNM.

2 helical membrane-spanning segments follow: residues 14-34 (VVLLVVFFALLALIGASAGYL) and 39-59 (YAMGLVLALVIGVIYATSMIF). His-143 contacts Zn(2+). The active site involves Glu-144. His-147 provides a ligand contact to Zn(2+). A run of 2 helical transmembrane segments spans residues 158 to 178 (IAVALASAVTVISSIGGRMLW) and 197 to 217 (IITLLLSLLSLLLAPLVASLI). Glu-226 contributes to the Zn(2+) binding site.

It belongs to the peptidase M48B family. Zn(2+) is required as a cofactor.

It localises to the cell membrane. This chain is Protease HtpX homolog, found in Streptococcus pyogenes serotype M6 (strain ATCC BAA-946 / MGAS10394).